The primary structure comprises 228 residues: Putative N-acetylmannosamine-6-phosphate 2-epimerase (228 aa).

Belongs to the NanE family.

The enzyme catalyses an N-acyl-D-glucosamine 6-phosphate = an N-acyl-D-mannosamine 6-phosphate. The protein operates within amino-sugar metabolism; N-acetylneuraminate degradation; D-fructose 6-phosphate from N-acetylneuraminate: step 3/5. Converts N-acetylmannosamine-6-phosphate (ManNAc-6-P) to N-acetylglucosamine-6-phosphate (GlcNAc-6-P). The sequence is that of Putative N-acetylmannosamine-6-phosphate 2-epimerase from Pasteurella multocida (strain Pm70).